We begin with the raw amino-acid sequence, 283 residues long: Cyclin-C (283 aa).

The Cyclin N-terminal domain maps to 46–144; sequence NVIQALGEHL…ILECEFYLLE (99 aa). The interval 252–283 is disordered; it reads TILNKMPKPKPPPNSEGEQGTNGSQSSGYSQS. The span at 267 to 283 shows a compositional bias: polar residues; it reads EGEQGTNGSQSSGYSQS.

This sequence belongs to the cyclin family. Cyclin C subfamily. In terms of assembly, component of the Mediator complex. The cylin/CDK pair formed by ccnc/cdk8 also associates with the large subunit of RNA polymerase II.

The protein localises to the nucleus. Its function is as follows. Component of the Mediator complex, a coactivator involved in regulated gene transcription of nearly all RNA polymerase II-dependent genes. Mediator functions as a bridge to convey information from gene-specific regulatory proteins to the basal RNA polymerase II transcription machinery. Mediator is recruited to promoters by direct interactions with regulatory proteins and serves as a scaffold for the assembly of a functional preinitiation complex with RNA polymerase II and the general transcription factors. Binds to and activates cyclin-dependent kinase cdk8 that phosphorylates the CTD (C-terminal domain) of the large subunit of RNA polymerase II (RNAp II), which may inhibit the formation of a transcription initiation complex. The polypeptide is Cyclin-C (ccnc) (Xenopus tropicalis (Western clawed frog)).